Reading from the N-terminus, the 273-residue chain is L-cysteine S-thiosulfotransferase subunit SoxA (273 aa).

Residues 1–24 (MKKTVTAVALLCALSSTAIAPTFA) form the signal peptide. The cysteines at positions 74 and 110 are disulfide-linked. Residues 162–273 (EMYELGKRMF…GVMLTPGIKR (112 aa)) enclose the Cytochrome c domain. 2 residues coordinate heme: cysteine 182 and histidine 186. Residue arginine 230 coordinates substrate. A heme-binding site is contributed by cysteine 234. Catalysis depends on cysteine 234, which acts as the Cysteine persulfide intermediate.

This sequence belongs to the SoxA family. As to quaternary structure, heterodimer of SoxA and SoxX. The cofactor is heme. Cysteine persulfide at Cys-234.

It is found in the periplasm. The enzyme catalyses L-cysteinyl-[SoxY protein] + thiosulfate + 2 Fe(III)-[cytochrome c] = S-sulfosulfanyl-L-cysteinyl-[SoxY protein] + 2 Fe(II)-[cytochrome c] + 2 H(+). The catalysed reaction is S-sulfanyl-L-cysteinyl-[SoxY protein] + thiosulfate + 2 Fe(III)-[cytochrome c] = S-(2-sulfodisulfanyl)-L-cysteinyl-[SoxY protein] + 2 Fe(II)-[cytochrome c] + 2 H(+). In terms of biological role, C-type monoheme cytochrome, which is part of the SoxAX cytochrome complex involved in sulfur oxidation. The SoxAX complex catalyzes the formation of a heterodisulfide bond between the conserved cysteine residue on a sulfur carrier SoxYZ complex subunit SoxY and thiosulfate or other inorganic sulfur substrates. This leads to the liberation of two electrons, which may be transferred from the SoxAX complex to another cytochrome c that then channels them into the respiratory electron transport chain. Some electrons may be used for reductive CO(2) fixation. This chain is L-cysteine S-thiosulfotransferase subunit SoxA, found in Hydrogenophilus thermoluteolus (Pseudomonas hydrogenothermophila).